The following is an 851-amino-acid chain: Phosphatidate phosphatase LPIN3 (851 aa).

The N-LIP stretch occupies residues 1–108 (MNYVGQLAET…VPPGLCTSPI (108 aa)). Disordered regions lie at residues 114–385 (SGFP…YLDD) and 400–432 (QSDS…EPTL). The segment covering 140 to 151 (GRRKRRRRRKPK) has biased composition (basic residues). Residues 141-148 (RRKRRRRR) carry the Nuclear localization signal motif. The residue at position 159 (Thr-159) is a Phosphothreonine. Residues Ser-161, Ser-162, and Ser-224 each carry the phosphoserine modification. Positions 268-286 (GRAGATSPPRGGPSTPSTS) are enriched in low complexity. Residues 418–429 (SLRDPNPEHEPE) are compositionally biased toward basic and acidic residues. Ser-463 bears the Phosphoserine mark. Residues 542–559 (SAQKEKTAAKEQQGEKTE) show a composition bias toward basic and acidic residues. The interval 542 to 591 (SAQKEKTAAKEQQGEKTEVLSSDDDAPDSPVILEIPSLPPSTPPSTPTYK) is disordered. Residues 578–587 (SLPPSTPPST) are compositionally biased toward pro residues. Residues 590–792 (YKKSLRLSSD…RIFTVNPRGE (203 aa)) are C-LIP. Positions 644 to 648 (DIDGT) match the DXDXT motif motif. The LXXIL motif motif lies at 655 to 659 (LGHIL).

This sequence belongs to the lipin family. Requires Mg(2+) as cofactor. Significant expression in intestine and other regions of the gastrointestinal tract.

Its subcellular location is the nucleus. The enzyme catalyses a 1,2-diacyl-sn-glycero-3-phosphate + H2O = a 1,2-diacyl-sn-glycerol + phosphate. With respect to regulation, inhibited by N-ethylmaleimide. Functionally, magnesium-dependent phosphatidate phosphatase enzyme which catalyzes the conversion of phosphatidic acid to diacylglycerol during triglyceride, phosphatidylcholine and phosphatidylethanolamine biosynthesis therefore regulates fatty acid metabolism. The chain is Phosphatidate phosphatase LPIN3 from Homo sapiens (Human).